The sequence spans 217 residues: tRNA (guanine-N(7)-)-methyltransferase (217 aa).

4 residues coordinate S-adenosyl-L-methionine: Glu-44, Glu-69, Asp-96, and Asp-118. Residue Asp-118 is part of the active site. Substrate is bound by residues Lys-122, Asp-154, and 191 to 194 (TEYE).

It belongs to the class I-like SAM-binding methyltransferase superfamily. TrmB family.

It catalyses the reaction guanosine(46) in tRNA + S-adenosyl-L-methionine = N(7)-methylguanosine(46) in tRNA + S-adenosyl-L-homocysteine. It functions in the pathway tRNA modification; N(7)-methylguanine-tRNA biosynthesis. In terms of biological role, catalyzes the formation of N(7)-methylguanine at position 46 (m7G46) in tRNA. This is tRNA (guanine-N(7)-)-methyltransferase from Bacillus anthracis (strain CDC 684 / NRRL 3495).